Here is a 428-residue protein sequence, read N- to C-terminus: Enolase (428 aa).

Position 173 (glutamine 173) interacts with (2R)-2-phosphoglycerate. Residue glutamate 217 is the Proton donor of the active site. Aspartate 253, glutamate 294, and aspartate 320 together coordinate Mg(2+). Lysine 345, arginine 374, serine 375, and lysine 396 together coordinate (2R)-2-phosphoglycerate. The Proton acceptor role is filled by lysine 345.

This sequence belongs to the enolase family. The cofactor is Mg(2+).

It localises to the cytoplasm. Its subcellular location is the secreted. It is found in the cell surface. The catalysed reaction is (2R)-2-phosphoglycerate = phosphoenolpyruvate + H2O. It participates in carbohydrate degradation; glycolysis; pyruvate from D-glyceraldehyde 3-phosphate: step 4/5. In terms of biological role, catalyzes the reversible conversion of 2-phosphoglycerate (2-PG) into phosphoenolpyruvate (PEP). It is essential for the degradation of carbohydrates via glycolysis. This chain is Enolase, found in Methanosarcina barkeri (strain Fusaro / DSM 804).